The chain runs to 208 residues: Octanoyltransferase (208 aa).

The BPL/LPL catalytic domain maps to 30–208 (GTASEAVFIL…ILKQEFYKIF (179 aa)). Residues 69 to 76 (RGGKFTYH), 142 to 144 (SIG), and 155 to 157 (GVA) contribute to the substrate site. Residue cysteine 173 is the Acyl-thioester intermediate of the active site.

It belongs to the LipB family.

The protein resides in the cytoplasm. The enzyme catalyses octanoyl-[ACP] + L-lysyl-[protein] = N(6)-octanoyl-L-lysyl-[protein] + holo-[ACP] + H(+). It functions in the pathway protein modification; protein lipoylation via endogenous pathway; protein N(6)-(lipoyl)lysine from octanoyl-[acyl-carrier-protein]: step 1/2. Functionally, catalyzes the transfer of endogenously produced octanoic acid from octanoyl-acyl-carrier-protein onto the lipoyl domains of lipoate-dependent enzymes. Lipoyl-ACP can also act as a substrate although octanoyl-ACP is likely to be the physiological substrate. This is Octanoyltransferase from Orientia tsutsugamushi (strain Ikeda) (Rickettsia tsutsugamushi).